A 270-amino-acid polypeptide reads, in one-letter code: Putative pyruvate, phosphate dikinase regulatory protein (270 aa).

Position 150–157 (150–157 (GPSRTSKS)) interacts with ADP.

The protein belongs to the pyruvate, phosphate/water dikinase regulatory protein family. PDRP subfamily.

The enzyme catalyses N(tele)-phospho-L-histidyl/L-threonyl-[pyruvate, phosphate dikinase] + ADP = N(tele)-phospho-L-histidyl/O-phospho-L-threonyl-[pyruvate, phosphate dikinase] + AMP + H(+). It catalyses the reaction N(tele)-phospho-L-histidyl/O-phospho-L-threonyl-[pyruvate, phosphate dikinase] + phosphate + H(+) = N(tele)-phospho-L-histidyl/L-threonyl-[pyruvate, phosphate dikinase] + diphosphate. Bifunctional serine/threonine kinase and phosphorylase involved in the regulation of the pyruvate, phosphate dikinase (PPDK) by catalyzing its phosphorylation/dephosphorylation. In Neorickettsia sennetsu (strain ATCC VR-367 / Miyayama) (Ehrlichia sennetsu), this protein is Putative pyruvate, phosphate dikinase regulatory protein.